A 504-amino-acid polypeptide reads, in one-letter code: uncharacterized protein (504 aa).

Positions 1–212 are excised as a propeptide; it reads MFMKSKAAGS…LYKTQDPVLD (212 aa).

This is an uncharacterized protein from Deinococcus radiodurans (strain ATCC 13939 / DSM 20539 / JCM 16871 / CCUG 27074 / LMG 4051 / NBRC 15346 / NCIMB 9279 / VKM B-1422 / R1).